The sequence spans 1117 residues: Centrosomal protein of 126 kDa (1117 aa).

Residues 1 to 42 (MLAGRPGTRSAVGELGTESSDNLDRAPLGPRESGGHHRPGSY) are disordered. A coiled-coil region spans residues 49–121 (LEKNLEEERQ…EEVTEKFQRA (73 aa)). Disordered regions lie at residues 643–664 (AENS…QQFH) and 730–759 (KKEE…IIRK). The span at 730-744 (KKEESKIPVHDDSKT) shows a compositional bias: basic and acidic residues. The segment covering 745-758 (KQGKPQRGRAKIIR) has biased composition (basic residues).

Interacts with DCTN1. In terms of tissue distribution, expressed in brain, lung, skeletal muscle, kidney, pancreas, testis and ovary.

The protein localises to the midbody. Its subcellular location is the cytoplasm. It is found in the cytoskeleton. It localises to the microtubule organizing center. The protein resides in the centrosome. The protein localises to the cilium basal body. Participates in cytokinesis. Necessary for microtubules and mitotic spindle organization. Involved in primary cilium formation. This is Centrosomal protein of 126 kDa from Homo sapiens (Human).